We begin with the raw amino-acid sequence, 180 residues long: Nucleoplasmin-3 (180 aa).

Position 2 is an N-acetylalanine (alanine 2). Phosphoserine is present on residues serine 13 and serine 16. Arginine 27 carries the post-translational modification Omega-N-methylarginine. Residues 141-180 form a disordered region; sequence TMSNDVSEEESEEEEEEEDSDEEEAELCPILPAKKQGGRP. Positions 146-166 are enriched in acidic residues; sequence VSEEESEEEEEEEDSDEEEAE. Serine 147, serine 151, and serine 160 each carry phosphoserine.

Belongs to the nucleoplasmin family. As to quaternary structure, interacts with NPM (via N-terminus). Forms a pentamer with NPM at a ratio 4:1 (NPM3/NPM). Two pentamers form a decamer. Phosphorylated.

It localises to the nucleus. The protein localises to the nucleolus. Plays a role in the regulation of diverse cellular processes such as ribosome biogenesis, chromatin remodeling or protein chaperoning. Modulates the histone chaperone function and the RNA-binding activity of nucleolar phosphoprotein B23/NPM. Efficiently mediates chromatin remodeling when included in a pentamer containing NPM3 and NPM. The polypeptide is Nucleoplasmin-3 (NPM3) (Pongo abelii (Sumatran orangutan)).